Reading from the N-terminus, the 684-residue chain is Phenoloxidase 2 (684 aa).

Positions 1–50 (MADKKNLLLLFDHPTEPVFMDKGKRVTVFDVPDSFLTDRYRPISNEVQSR) are excised as a propeptide. Cu cation-binding residues include His-208, His-212, and His-238. Catalysis depends on Glu-350, which acts as the Proton acceptor. Cu cation-binding residues include His-365, His-369, and His-405. N-linked (GlcNAc...) asparagine glycans are attached at residues Asn-448 and Asn-492. Intrachain disulfides connect Cys-581–Cys-623 and Cys-583–Cys-630. N-linked (GlcNAc...) asparagine glycosylation is found at Asn-665 and Asn-677.

It belongs to the tyrosinase family. Cu(2+) serves as cofactor. Upon activation, a trypsin type protease cleaves prophenol oxidase to yield the active enzyme.

The protein localises to the secreted. It carries out the reaction 2 L-dopa + O2 = 2 L-dopaquinone + 2 H2O. The catalysed reaction is L-tyrosine + O2 = L-dopaquinone + H2O. Functionally, this is a copper-containing oxidase that functions in the formation of pigments such as melanins and other polyphenolic compounds. Catalyzes the rate-limiting conversions of tyrosine to DOPA, DOPA to DOPA-quinone and possibly 5,6 dihydroxyindole to indole-5'6 quinonee. The polypeptide is Phenoloxidase 2 (PPO2) (Drosophila melanogaster (Fruit fly)).